A 197-amino-acid chain; its full sequence is Recombination protein RecR (197 aa).

The C4-type zinc-finger motif lies at 57–72 (CSVCFGITEDDPCRFC). One can recognise a Toprim domain in the interval 79-174 (GAICVVEEPQ…RVTRLAHGIP (96 aa)).

This sequence belongs to the RecR family.

In terms of biological role, may play a role in DNA repair. It seems to be involved in an RecBC-independent recombinational process of DNA repair. It may act with RecF and RecO. The polypeptide is Recombination protein RecR (Geobacter sulfurreducens (strain ATCC 51573 / DSM 12127 / PCA)).